The chain runs to 564 residues: Proline--tRNA ligase (564 aa).

The protein belongs to the class-II aminoacyl-tRNA synthetase family. ProS type 1 subfamily. In terms of assembly, homodimer.

The protein localises to the cytoplasm. The catalysed reaction is tRNA(Pro) + L-proline + ATP = L-prolyl-tRNA(Pro) + AMP + diphosphate. Its function is as follows. Catalyzes the attachment of proline to tRNA(Pro) in a two-step reaction: proline is first activated by ATP to form Pro-AMP and then transferred to the acceptor end of tRNA(Pro). As ProRS can inadvertently accommodate and process non-cognate amino acids such as alanine and cysteine, to avoid such errors it has two additional distinct editing activities against alanine. One activity is designated as 'pretransfer' editing and involves the tRNA(Pro)-independent hydrolysis of activated Ala-AMP. The other activity is designated 'posttransfer' editing and involves deacylation of mischarged Ala-tRNA(Pro). The misacylated Cys-tRNA(Pro) is not edited by ProRS. This is Proline--tRNA ligase from Xylella fastidiosa (strain M12).